Consider the following 243-residue polypeptide: DNA repair protein RecO (243 aa).

This sequence belongs to the RecO family.

Its function is as follows. Involved in DNA repair and RecF pathway recombination. The protein is DNA repair protein RecO of Vibrio parahaemolyticus serotype O3:K6 (strain RIMD 2210633).